A 24-amino-acid polypeptide reads, in one-letter code: Myotoxin TmC4-47.2 (24 aa).

Residues 1–24 (KASSSAPKGWTHHGSRFTFHRGSM) are disordered. Over residues 10–24 (WTHHGSRFTFHRGSM) the composition is skewed to basic residues. Residues 13–24 (HGSRFTFHRGSM) enclose the C-type lectin domain.

As to expression, expressed by the venom gland.

Its subcellular location is the secreted. Able to depolarize frog skeletal muscle fibers, but has no effects on squid giant axons. Tetrodotoxin is able to partially antagonize the depolarization. Induces myonecrosis. The chain is Myotoxin TmC4-47.2 from Thalassophryne maculosa (Cano toadfish).